Here is a 591-residue protein sequence, read N- to C-terminus: L-fucose isomerase (591 aa).

Residues Glu-337 and Asp-361 each act as proton acceptor in the active site. Mn(2+) contacts are provided by Glu-337, Asp-361, and His-528.

Belongs to the L-fucose isomerase family. In terms of assembly, homohexamer. The cofactor is Mn(2+).

It localises to the cytoplasm. It carries out the reaction L-fucose = L-fuculose. Its pathway is carbohydrate degradation; L-fucose degradation; L-lactaldehyde and glycerone phosphate from L-fucose: step 1/3. Its function is as follows. Converts the aldose L-fucose into the corresponding ketose L-fuculose. The sequence is that of L-fucose isomerase from Escherichia coli O6:H1 (strain CFT073 / ATCC 700928 / UPEC).